The following is a 177-amino-acid chain: ATP synthase subunit delta 1 (177 aa).

The protein belongs to the ATPase delta chain family. F-type ATPases have 2 components, F(1) - the catalytic core - and F(0) - the membrane proton channel. F(1) has five subunits: alpha(3), beta(3), gamma(1), delta(1), epsilon(1). F(0) has three main subunits: a(1), b(2) and c(10-14). The alpha and beta chains form an alternating ring which encloses part of the gamma chain. F(1) is attached to F(0) by a central stalk formed by the gamma and epsilon chains, while a peripheral stalk is formed by the delta and b chains.

The protein localises to the cell inner membrane. Functionally, f(1)F(0) ATP synthase produces ATP from ADP in the presence of a proton or sodium gradient. F-type ATPases consist of two structural domains, F(1) containing the extramembraneous catalytic core and F(0) containing the membrane proton channel, linked together by a central stalk and a peripheral stalk. During catalysis, ATP synthesis in the catalytic domain of F(1) is coupled via a rotary mechanism of the central stalk subunits to proton translocation. Its function is as follows. This protein is part of the stalk that links CF(0) to CF(1). It either transmits conformational changes from CF(0) to CF(1) or is implicated in proton conduction. This is ATP synthase subunit delta 1 from Vibrio campbellii (strain ATCC BAA-1116).